The following is a 206-amino-acid chain: Protease (206 aa).

Residues His54, Asp71, and Cys122 contribute to the active site.

It belongs to the peptidase C5 family. As to quaternary structure, interacts with protease cofactor pVI-C; this interaction is necessary for protease activation.

It localises to the virion. The protein resides in the host nucleus. It carries out the reaction Cleaves proteins of the adenovirus and its host cell at two consensus sites: -Yaa-Xaa-Gly-Gly-|-Xaa- and -Yaa-Xaa-Gly-Xaa-|-Gly- (in which Yaa is Met, Ile or Leu, and Xaa is any amino acid).. Requires DNA and protease cofactor for maximal activation. Inside nascent virions, becomes partially activated by binding to the viral DNA, allowing it to cleave the cofactor that binds to the protease and fully activates it. Actin, like the viral protease cofactor, seems to act as a cofactor in the cleavage of cytokeratin 18 and of actin itself. In terms of biological role, cleaves viral precursor proteins (pTP, pIIIa, pVI, pVII, pVIII, and pX) inside newly assembled particles giving rise to mature virions. Protease complexed to its cofactor slides along the viral DNA to specifically locate and cleave the viral precursors. Mature virions have a weakened organization compared to the unmature virions, thereby facilitating subsequent uncoating. Without maturation, the particle lacks infectivity and is unable to uncoat. Late in adenovirus infection, in the cytoplasm, may participate in the cytoskeleton destruction. Cleaves host cell cytoskeletal keratins K7 and K18. The polypeptide is Protease (Homo sapiens (Human)).